Here is a 495-residue protein sequence, read N- to C-terminus: Probable cytosol aminopeptidase (495 aa).

Mn(2+) contacts are provided by Lys267 and Asp272. The active site involves Lys279. The Mn(2+) site is built by Asp290, Asp349, and Glu351. Residue Arg353 is part of the active site.

The protein belongs to the peptidase M17 family. Requires Mn(2+) as cofactor.

The protein resides in the cytoplasm. The catalysed reaction is Release of an N-terminal amino acid, Xaa-|-Yaa-, in which Xaa is preferably Leu, but may be other amino acids including Pro although not Arg or Lys, and Yaa may be Pro. Amino acid amides and methyl esters are also readily hydrolyzed, but rates on arylamides are exceedingly low.. The enzyme catalyses Release of an N-terminal amino acid, preferentially leucine, but not glutamic or aspartic acids.. Functionally, presumably involved in the processing and regular turnover of intracellular proteins. Catalyzes the removal of unsubstituted N-terminal amino acids from various peptides. In Histophilus somni (strain 2336) (Haemophilus somnus), this protein is Probable cytosol aminopeptidase.